Reading from the N-terminus, the 180-residue chain is uncharacterized protein (180 aa).

The 64-residue stretch at 17–80 (RRSRILHYLM…LIPNMGVRLT (64 aa)) folds into the HTH dtxR-type domain.

The protein belongs to the DtxR/MntR family.

This is an uncharacterized protein from Aeropyrum pernix (strain ATCC 700893 / DSM 11879 / JCM 9820 / NBRC 100138 / K1).